Reading from the N-terminus, the 214-residue chain is Nucleoside triphosphate pyrophosphatase (214 aa).

The Proton acceptor role is filled by D79.

Belongs to the Maf family. It depends on a divalent metal cation as a cofactor.

Its subcellular location is the cytoplasm. The catalysed reaction is a ribonucleoside 5'-triphosphate + H2O = a ribonucleoside 5'-phosphate + diphosphate + H(+). It carries out the reaction a 2'-deoxyribonucleoside 5'-triphosphate + H2O = a 2'-deoxyribonucleoside 5'-phosphate + diphosphate + H(+). Its function is as follows. Nucleoside triphosphate pyrophosphatase. May have a dual role in cell division arrest and in preventing the incorporation of modified nucleotides into cellular nucleic acids. The chain is Nucleoside triphosphate pyrophosphatase from Rhodococcus jostii (strain RHA1).